Here is an 84-residue protein sequence, read N- to C-terminus: Cell division topological specificity factor (84 aa).

It belongs to the MinE family.

Prevents the cell division inhibition by proteins MinC and MinD at internal division sites while permitting inhibition at polar sites. This ensures cell division at the proper site by restricting the formation of a division septum at the midpoint of the long axis of the cell. This is Cell division topological specificity factor from Granulibacter bethesdensis (strain ATCC BAA-1260 / CGDNIH1).